The sequence spans 158 residues: Transcriptional regulator MraZ (158 aa).

SpoVT-AbrB domains follow at residues 5–50 (IYET…GGVY) and 91–134 (AVEC…SQSE).

It belongs to the MraZ family. Forms oligomers.

Its subcellular location is the cytoplasm. It is found in the nucleoid. The protein is Transcriptional regulator MraZ of Geobacter metallireducens (strain ATCC 53774 / DSM 7210 / GS-15).